Consider the following 157-residue polypeptide: Transcription elongation factor GreA (157 aa).

Positions 13 to 75 (RARLEAELEE…EIKSILARAQ (63 aa)) form a coiled coil.

Belongs to the GreA/GreB family.

In terms of biological role, necessary for efficient RNA polymerase transcription elongation past template-encoded arresting sites. The arresting sites in DNA have the property of trapping a certain fraction of elongating RNA polymerases that pass through, resulting in locked ternary complexes. Cleavage of the nascent transcript by cleavage factors such as GreA or GreB allows the resumption of elongation from the new 3'terminus. GreA releases sequences of 2 to 3 nucleotides. In Roseiflexus castenholzii (strain DSM 13941 / HLO8), this protein is Transcription elongation factor GreA.